The sequence spans 503 residues: Maturase K (503 aa).

Belongs to the intron maturase 2 family. MatK subfamily.

It is found in the plastid. Its subcellular location is the chloroplast. In terms of biological role, usually encoded in the trnK tRNA gene intron. Probably assists in splicing its own and other chloroplast group II introns. This chain is Maturase K, found in Kunzea baxteri (Scarlet kunzea).